The chain runs to 299 residues: 4-hydroxy-tetrahydrodipicolinate synthase (299 aa).

Position 47 (threonine 47) interacts with pyruvate. Tyrosine 136 functions as the Proton donor/acceptor in the catalytic mechanism. The active-site Schiff-base intermediate with substrate is the lysine 164. Alanine 205 is a pyruvate binding site.

It belongs to the DapA family. Homotetramer; dimer of dimers.

It localises to the cytoplasm. The catalysed reaction is L-aspartate 4-semialdehyde + pyruvate = (2S,4S)-4-hydroxy-2,3,4,5-tetrahydrodipicolinate + H2O + H(+). It functions in the pathway amino-acid biosynthesis; L-lysine biosynthesis via DAP pathway; (S)-tetrahydrodipicolinate from L-aspartate: step 3/4. Catalyzes the condensation of (S)-aspartate-beta-semialdehyde [(S)-ASA] and pyruvate to 4-hydroxy-tetrahydrodipicolinate (HTPA). This chain is 4-hydroxy-tetrahydrodipicolinate synthase, found in Pediococcus pentosaceus (strain ATCC 25745 / CCUG 21536 / LMG 10740 / 183-1w).